Here is a 141-residue protein sequence, read N- to C-terminus: MAKKVKAIVKLQLPAGKATPAPPVGPALGQHGVPIMNFVKEYNEKTAHLAGQIIPVVVTIYEDRSFTFVLKTPPAADLLRRAAGIEKGAADPKRQKVGRVTREQIREIAQLKMPDLNARDLEAAMRMIEGTARSMGIEVVG.

The protein belongs to the universal ribosomal protein uL11 family. As to quaternary structure, part of the ribosomal stalk of the 50S ribosomal subunit. Interacts with L10 and the large rRNA to form the base of the stalk. L10 forms an elongated spine to which L12 dimers bind in a sequential fashion forming a multimeric L10(L12)X complex. Post-translationally, one or more lysine residues are methylated.

Forms part of the ribosomal stalk which helps the ribosome interact with GTP-bound translation factors. The chain is Large ribosomal subunit protein uL11 from Thermomicrobium roseum (strain ATCC 27502 / DSM 5159 / P-2).